Here is a 150-residue protein sequence, read N- to C-terminus: Putative esterase SSO1253 (150 aa).

It belongs to the thioesterase PaaI family.

The protein is Putative esterase SSO1253 of Saccharolobus solfataricus (strain ATCC 35092 / DSM 1617 / JCM 11322 / P2) (Sulfolobus solfataricus).